We begin with the raw amino-acid sequence, 208 residues long: MGISRDNWHKRRKTGGKRKPVHKKRKYELGRPPSNTKLGPKRIHTVRVRGGNKKYRALRLDVGNFSWGSECCTRKTRIIDVVYNASNNELVRTKTLVKNCVILVDSAPFRQWYESHYALPLGRKKGAKLTPEEEDILNKKRSKKVQKKFDKRRKNSKISPLLDEQFQQGKLLACISSRPGQCGRADGYVLEGKELEFYLRKIKAKKGK.

The disordered stretch occupies residues 1-40 (MGISRDNWHKRRKTGGKRKPVHKKRKYELGRPPSNTKLGP). The segment covering 8 to 26 (WHKRRKTGGKRKPVHKKRK) has biased composition (basic residues).

The protein belongs to the eukaryotic ribosomal protein eS8 family. Component of the small ribosomal subunit.

Its subcellular location is the cytoplasm. Its function is as follows. Component of the small ribosomal subunit. The ribosome is a large ribonucleoprotein complex responsible for the synthesis of proteins in the cell. In Ictalurus punctatus (Channel catfish), this protein is Small ribosomal subunit protein eS8 (rps8).